The primary structure comprises 379 residues: Glutamate 5-kinase (379 aa).

Lys19 is an ATP binding site. Substrate is bound by residues Ser59, Asp146, and Asn158. Residues 178 to 179 and 220 to 226 contribute to the ATP site; these read TD and TGGMATK. The 79-residue stretch at 285–363 folds into the PUA domain; the sequence is SGDIIIDDGA…KDIISILGHD (79 aa).

Belongs to the glutamate 5-kinase family.

It localises to the cytoplasm. It catalyses the reaction L-glutamate + ATP = L-glutamyl 5-phosphate + ADP. Its pathway is amino-acid biosynthesis; L-proline biosynthesis; L-glutamate 5-semialdehyde from L-glutamate: step 1/2. Its function is as follows. Catalyzes the transfer of a phosphate group to glutamate to form L-glutamate 5-phosphate. The polypeptide is Glutamate 5-kinase (Vibrio parahaemolyticus serotype O3:K6 (strain RIMD 2210633)).